We begin with the raw amino-acid sequence, 178 residues long: Large ribosomal subunit protein uL6 (178 aa).

The protein belongs to the universal ribosomal protein uL6 family. In terms of assembly, part of the 50S ribosomal subunit.

In terms of biological role, this protein binds to the 23S rRNA, and is important in its secondary structure. It is located near the subunit interface in the base of the L7/L12 stalk, and near the tRNA binding site of the peptidyltransferase center. This chain is Large ribosomal subunit protein uL6, found in Lactiplantibacillus plantarum (strain ATCC BAA-793 / NCIMB 8826 / WCFS1) (Lactobacillus plantarum).